The chain runs to 680 residues: Meiotic recombination protein REC8 (680 aa).

Composition is skewed to low complexity over residues glutamate 278–aspartate 290 and serine 436–threonine 446. Disordered regions lie at residues glutamate 278–glycine 297, arginine 431–aspartate 467, and glutamate 540–glutamine 560. The segment covering serine 550–glutamine 560 has biased composition (polar residues).

The protein belongs to the rad21 family. In terms of processing, proteolytically cleaved by ESP1. Phosphorylated by CDC5. CDC5 phosphorylation is necessary for cleavage by ESP1 and subsequent removal from chromosome arms.

The protein localises to the nucleus. The protein resides in the chromosome. It is found in the centromere. In terms of biological role, replaces the SCC1 mitosis-specific cohesin to ensure sister chromatid cohesion during meiosis. Is cleaved by ESP1 shortly before the first meiotic division, and dissociates from chromatin, allowing sister chromatids to segregate. Is protected from cleavage by SPO13. Promotes localization of the LINC complex subunit MPS3 on nuclear envelope in mitotic cells. In Saccharomyces cerevisiae (strain ATCC 204508 / S288c) (Baker's yeast), this protein is Meiotic recombination protein REC8.